We begin with the raw amino-acid sequence, 299 residues long: MKLGIIGAGKWGSALHFALSKKNDVYITSRHYHDLKNFVSLEEILRLEYLILVLPAQVIGPWLEKHPLRKDHKVLLASKGIDIKKKKFLNEILQQFIPQEHLAVLSGPSFAAEVQKGLPTAVVVSSSNEILAKTYAQMFPDFMKAYVDDDVVGAEIAGAYKNVIAIASGICDGLKLGNNARAALLARGLVEMERFASHFGARMRTFLGLSGAGDLFLTASSTLSRNYRVGLGLALGKDLQRILNDLGEVAEGVYTVEAIIEIAKEHSIYVPIAREVYEIIHGKNPKLSIIHLLERNGDD.

NADPH contacts are provided by Trp11, Arg30, His31, and Lys79. Positions 79, 107, and 109 each coordinate sn-glycerol 3-phosphate. Ala111 provides a ligand contact to NADPH. Sn-glycerol 3-phosphate contacts are provided by Lys161, Asp214, Ser224, Arg225, and Asn226. Lys161 functions as the Proton acceptor in the catalytic mechanism. Position 225 (Arg225) interacts with NADPH. The NADPH site is built by Val249 and Glu251.

The protein belongs to the NAD-dependent glycerol-3-phosphate dehydrogenase family.

The protein resides in the cytoplasm. It catalyses the reaction sn-glycerol 3-phosphate + NAD(+) = dihydroxyacetone phosphate + NADH + H(+). It carries out the reaction sn-glycerol 3-phosphate + NADP(+) = dihydroxyacetone phosphate + NADPH + H(+). Its pathway is membrane lipid metabolism; glycerophospholipid metabolism. Catalyzes the reduction of the glycolytic intermediate dihydroxyacetone phosphate (DHAP) to sn-glycerol 3-phosphate (G3P), the key precursor for phospholipid synthesis. In Nitratiruptor sp. (strain SB155-2), this protein is Glycerol-3-phosphate dehydrogenase [NAD(P)+].